The sequence spans 363 residues: Galactokinase (363 aa).

Residue 16 to 19 (EHTD) coordinates substrate. ATP is bound by residues Ser-50 and 103 to 109 (GSGLSSS). Mg(2+) is bound by residues Ser-109 and Glu-141. The Proton acceptor role is filled by Asp-153. Residue Tyr-205 participates in substrate binding.

It belongs to the GHMP kinase family. GalK subfamily.

The protein resides in the cytoplasm. The enzyme catalyses alpha-D-galactose + ATP = alpha-D-galactose 1-phosphate + ADP + H(+). Its pathway is carbohydrate metabolism; galactose metabolism. In terms of biological role, catalyzes the transfer of the gamma-phosphate of ATP to D-galactose to form alpha-D-galactose-1-phosphate (Gal-1-P). The sequence is that of Galactokinase from Mycobacterium tuberculosis (strain ATCC 25177 / H37Ra).